A 75-amino-acid chain; its full sequence is Small ribosomal subunit protein bS18 (75 aa).

It belongs to the bacterial ribosomal protein bS18 family. Part of the 30S ribosomal subunit. Forms a tight heterodimer with protein bS6.

Its function is as follows. Binds as a heterodimer with protein bS6 to the central domain of the 16S rRNA, where it helps stabilize the platform of the 30S subunit. The protein is Small ribosomal subunit protein bS18 of Pectobacterium atrosepticum (strain SCRI 1043 / ATCC BAA-672) (Erwinia carotovora subsp. atroseptica).